Consider the following 388-residue polypeptide: Chitinase 4 (388 aa).

The 354-residue stretch at 22 to 375 (FKTCVYFSNW…KNFVDQLGGV (354 aa)) folds into the GH18 domain. Residues Asn30 and Asn82 are each glycosylated (N-linked (GlcNAc...) asparagine). Chitin contacts are provided by residues 82–83 (NQ) and 109–112 (GGWG). N-linked (GlcNAc...) asparagine glycans are attached at residues Asn123 and Asn132. Glu151 serves as the catalytic Proton donor. Tyr152 lines the chitin pocket. Residue Asn155 is glycosylated (N-linked (GlcNAc...) asparagine). 208 to 211 (MCYD) serves as a coordination point for chitin. Asn237 is a glycosylation site (N-linked (GlcNAc...) asparagine). A chitin-binding site is contributed by Trp350.

This sequence belongs to the glycosyl hydrolase 18 family. Chitinase class V subfamily.

It localises to the secreted. The catalysed reaction is Random endo-hydrolysis of N-acetyl-beta-D-glucosaminide (1-&gt;4)-beta-linkages in chitin and chitodextrins.. Chitinase involved in the remodeling of chitin in the fungal cell wall. Plays a role in sporulation. The polypeptide is Chitinase 4 (CHT4) (Candida albicans (strain SC5314 / ATCC MYA-2876) (Yeast)).